The following is a 385-amino-acid chain: 3-hydroxyisobutyryl-CoA hydrolase, mitochondrial (385 aa).

The N-terminal 32 residues, 1 to 32, are a transit peptide targeting the mitochondrion; that stretch reads MGQPYAWRLLSRVSSFRRASVILQHLRMSMHT. Residues lysine 54, lysine 91, and lysine 100 each carry the N6-acetyllysine; alternate modification. 3 positions are modified to N6-succinyllysine; alternate: lysine 54, lysine 91, and lysine 100. Substrate-binding residues include glutamate 120, glycine 145, glutamate 168, and aspartate 176. Lysine 220 carries the post-translational modification N6-acetyllysine; alternate. Lysine 220 bears the N6-succinyllysine; alternate mark. Serine 233 carries the post-translational modification Phosphoserine. Residues lysine 249 and lysine 256 each carry the N6-succinyllysine modification. An N6-acetyllysine; alternate modification is found at lysine 296. The residue at position 296 (lysine 296) is an N6-succinyllysine; alternate. Lysine 300 is subject to N6-succinyllysine. Position 352 is an N6-acetyllysine; alternate (lysine 352). Residue lysine 352 is modified to N6-succinyllysine; alternate. N6-acetyllysine occurs at positions 359 and 364. The residue at position 376 (lysine 376) is an N6-succinyllysine.

This sequence belongs to the enoyl-CoA hydratase/isomerase family.

Its subcellular location is the mitochondrion. It catalyses the reaction 3-hydroxy-2-methylpropanoyl-CoA + H2O = 3-hydroxy-2-methylpropanoate + CoA + H(+). The protein operates within amino-acid degradation; L-valine degradation. In terms of biological role, hydrolyzes 3-hydroxyisobutyryl-CoA (HIBYL-CoA), a saline catabolite. Has high activity toward isobutyryl-CoA. Could be an isobutyryl-CoA dehydrogenase that functions in valine catabolism. Also hydrolyzes 3-hydroxypropanoyl-CoA. The polypeptide is 3-hydroxyisobutyryl-CoA hydrolase, mitochondrial (Hibch) (Mus musculus (Mouse)).